The chain runs to 471 residues: Phosphoglycerate kinase (471 aa).

Substrate contacts are provided by residues 24-26, Arg41, 64-67, Arg127, and Arg169; these read DFN and HLSR. ATP is bound by residues Lys220, Gly307, Glu338, and 368–371; that span reads GGDS. The tract at residues 417 to 471 is disordered; the sequence is KVEAVKEKTTTTTESASKEKSSTAKTASKPATSKTTAAKKPAEKKPAAKKPAAKK. Positions 439-455 are enriched in low complexity; sequence TAKTASKPATSKTTAAK.

It belongs to the phosphoglycerate kinase family. As to quaternary structure, monomer.

It localises to the cytoplasm. It carries out the reaction (2R)-3-phosphoglycerate + ATP = (2R)-3-phospho-glyceroyl phosphate + ADP. The protein operates within carbohydrate degradation; glycolysis; pyruvate from D-glyceraldehyde 3-phosphate: step 2/5. This is Phosphoglycerate kinase from Malacoplasma penetrans (strain HF-2) (Mycoplasma penetrans).